The chain runs to 542 residues: Thermosome subunit alpha (542 aa).

The protein belongs to the TCP-1 chaperonin family. As to quaternary structure, forms a Heterooligomeric complex of two stacked eight-membered rings.

Molecular chaperone; binds unfolded polypeptides in vitro, and has a weak ATPase activity. The sequence is that of Thermosome subunit alpha (thsA) from Methanothermobacter thermautotrophicus (strain ATCC 29096 / DSM 1053 / JCM 10044 / NBRC 100330 / Delta H) (Methanobacterium thermoautotrophicum).